The primary structure comprises 273 residues: Protein FAM210A (273 aa).

Residues 95–116 (VLSSSSTSQETPSEKKEEPDPL) are disordered. The span at 106-116 (PSEKKEEPDPL) shows a compositional bias: basic and acidic residues. Residues 118–230 (DKSISLYQRF…GYMSTPPPVK (113 aa)) enclose the DUF1279 domain. Residues 138 to 158 (LIPVHLITSGIWFGTFYYASI) traverse the membrane as a helical segment. Positions 233 to 272 (LQGRMEETKELISEKMEETKDRLTEKLQETKEKVSFKKKV) form a coiled coil. The interval 247–273 (KMEETKDRLTEKLQETKEKVSFKKKVE) is disordered.

It belongs to the FAM210 family. As to quaternary structure, interacts with ATAD3A.

The protein resides in the membrane. It localises to the mitochondrion. The protein localises to the cytoplasm. May play a role in the structure and strength of both muscle and bone. The polypeptide is Protein FAM210A (Fam210a) (Rattus norvegicus (Rat)).